Here is a 218-residue protein sequence, read N- to C-terminus: MSRSYYRTRIKFCGMTRAGDVRLAGELGVDAVGFIFARESSRRVAPAEARAMRQAIAPMVDVVALFRNNSKEEVREVLRTVRPTLLQFHGEEDESFCRSFNMPYLKAIAMGGREEVNARTLQLRYPSAAGFLFDSHAPGGGGGTGVAFDWSRVPTGLHRPFLLAGGLNPENVYDAVLATLPWGVDVSSGIELEPGIKDGYRMRTFVEEVRRADCTVLE.

It belongs to the TrpF family.

The enzyme catalyses N-(5-phospho-beta-D-ribosyl)anthranilate = 1-(2-carboxyphenylamino)-1-deoxy-D-ribulose 5-phosphate. It participates in amino-acid biosynthesis; L-tryptophan biosynthesis; L-tryptophan from chorismate: step 3/5. The protein is N-(5'-phosphoribosyl)anthranilate isomerase of Stenotrophomonas maltophilia (strain R551-3).